Here is a 329-residue protein sequence, read N- to C-terminus: Serpentine receptor class alpha-4 (329 aa).

The next 6 helical transmembrane spans lie at 25–45 (IIVLIPVFITFIFTYYAIKVV), 103–123 (LYLEVFVSGVAGMVYGQTGLL), 144–164 (GLAISVSVLCLSFITSRLIIW), 188–208 (YFQSICTLLALFNLVTSILIW), 238–258 (ICFLTFVQFIFFLVYSLGFFI), and 273–293 (LVAVWLYTPPYIAASFPILIF).

Belongs to the nematode receptor-like protein sra family.

The protein localises to the membrane. The sequence is that of Serpentine receptor class alpha-4 (sra-4) from Caenorhabditis elegans.